The following is a 636-amino-acid chain: MPVAGGRIPDRDIAAIREKVRIEDVVGDYVQLRRAGADSLKGLCPFHDEKTPSFHVRPNHGHFHCFGCGEGGDVYAFIQKIEHVSFVEAVELLADKVGYTVTYTGSSTTNVQRDRGSRSRLLAANAAAAEFYAEALQSEEAAPARQYLTERNFDAAAAAKFGCGYAPSGWDKLTKHLLRKGFEFKELEAAGLSREGKRGPMDRFHRRLLWPIRVSSGETIGFGARRLFDDDPNQAKYVNTPETVLYKKSQVLFGLDLAKRDIAKGHQAVVVEGYTDVMAMHLAGVTTAVASCGTAFGEQHLSMLRRLMMDDNFFRGELIYVFDGDDAGRAAAVKAFEGEQNLSGQSFVAVAADGMDPCDLRLRSGDGALRDLVARRTPLFEFVIRSALAEHDLDSAEGRVAALRRCVPMLARIKDPTLRDEYARQLAGWVGWDNVAQVIGRVREEAKGGGRKDNNRRGQETAARPKPPPVQRPDPTDPTLWPQREALKAGLQYPALAGPVFDTLTVESFTHPGYGAVRTAMEAAGGTSAGITGAQWIETVREQTTSPAAANLVNELSVETINVEDDEKLPRYISSVLARLQEVWVGRQIAEVKSKLQRMSPVEQGDEYHALFGDLVAMESYRRSLLEQASGDDLTA.

Residues 44 to 68 (CPFHDEKTPSFHVRPNHGHFHCFGC) form a CHC2-type zinc finger. The Toprim domain occupies 266-352 (HQAVVVEGYT…SGQSFVAVAA (87 aa)). Mg(2+)-binding residues include glutamate 272, aspartate 323, and aspartate 325. Over residues 443-459 (REEAKGGGRKDNNRRGQ) the composition is skewed to basic and acidic residues. Residues 443–481 (REEAKGGGRKDNNRRGQETAARPKPPPVQRPDPTDPTLW) form a disordered region.

The protein belongs to the DnaG primase family. Monomer. Interacts with DnaB. It depends on Zn(2+) as a cofactor. Mg(2+) is required as a cofactor.

It carries out the reaction ssDNA + n NTP = ssDNA/pppN(pN)n-1 hybrid + (n-1) diphosphate.. Functionally, RNA polymerase that catalyzes the synthesis of short RNA molecules used as primers for DNA polymerase during DNA replication. This Mycolicibacterium smegmatis (strain ATCC 700084 / mc(2)155) (Mycobacterium smegmatis) protein is DNA primase.